The sequence spans 146 residues: uncharacterized protein (146 aa).

In terms of domain architecture, N-acetyltransferase spans 7 to 146 (LQINYKTDEL…EGHDILIWNP (140 aa)).

This is an uncharacterized protein from Staphylococcus epidermidis (strain ATCC 12228 / FDA PCI 1200).